The following is a 23-amino-acid chain: Paralytic peptide 1 (23 aa).

An intrachain disulfide couples C7 to C19.

This sequence belongs to the GBP/PSP1/paralytic peptide family. As to expression, hemolymph.

Functionally, causes rapid, rigid paralysis when injected into Lepidopteran larvae. The physiological role may be to reduce hemolymph loss following injury and promote wound healing. The chain is Paralytic peptide 1 from Heliothis virescens (Tobacco budworm moth).